A 38-amino-acid polypeptide reads, in one-letter code: Large ribosomal subunit protein bL36 (38 aa).

This sequence belongs to the bacterial ribosomal protein bL36 family.

The polypeptide is Large ribosomal subunit protein bL36 (Porphyromonas gingivalis (strain ATCC 33277 / DSM 20709 / CIP 103683 / JCM 12257 / NCTC 11834 / 2561)).